A 577-amino-acid chain; its full sequence is Dihydroxy-acid dehydratase (577 aa).

Over residues 1–10 (MLKRSFDKSK) the composition is skewed to basic and acidic residues. A disordered region spans residues 1 to 22 (MLKRSFDKSKLPSRHVTEGPSR). Residue C56 participates in [2Fe-2S] cluster binding. Mg(2+) is bound at residue D88. Position 129 (C129) interacts with [2Fe-2S] cluster. Mg(2+) is bound by residues D130 and K131. K131 is subject to N6-carboxylysine. A [2Fe-2S] cluster-binding site is contributed by C201. A Mg(2+)-binding site is contributed by E453. S479 (proton acceptor) is an active-site residue.

The protein belongs to the IlvD/Edd family. As to quaternary structure, homodimer. Requires [2Fe-2S] cluster as cofactor. Mg(2+) serves as cofactor.

It catalyses the reaction (2R)-2,3-dihydroxy-3-methylbutanoate = 3-methyl-2-oxobutanoate + H2O. It carries out the reaction (2R,3R)-2,3-dihydroxy-3-methylpentanoate = (S)-3-methyl-2-oxopentanoate + H2O. It participates in amino-acid biosynthesis; L-isoleucine biosynthesis; L-isoleucine from 2-oxobutanoate: step 3/4. Its pathway is amino-acid biosynthesis; L-valine biosynthesis; L-valine from pyruvate: step 3/4. Functions in the biosynthesis of branched-chain amino acids. Catalyzes the dehydration of (2R,3R)-2,3-dihydroxy-3-methylpentanoate (2,3-dihydroxy-3-methylvalerate) into 2-oxo-3-methylpentanoate (2-oxo-3-methylvalerate) and of (2R)-2,3-dihydroxy-3-methylbutanoate (2,3-dihydroxyisovalerate) into 2-oxo-3-methylbutanoate (2-oxoisovalerate), the penultimate precursor to L-isoleucine and L-valine, respectively. The chain is Dihydroxy-acid dehydratase from Dinoroseobacter shibae (strain DSM 16493 / NCIMB 14021 / DFL 12).